The sequence spans 250 residues: 5'-nucleotidase SurE (250 aa).

A divalent metal cation is bound by residues aspartate 8, aspartate 9, serine 40, and asparagine 92.

It belongs to the SurE nucleotidase family. A divalent metal cation is required as a cofactor.

It is found in the cytoplasm. The enzyme catalyses a ribonucleoside 5'-phosphate + H2O = a ribonucleoside + phosphate. Its function is as follows. Nucleotidase that shows phosphatase activity on nucleoside 5'-monophosphates. The protein is 5'-nucleotidase SurE of Dichelobacter nodosus (strain VCS1703A).